The following is a 136-amino-acid chain: ATP synthase epsilon chain (136 aa).

This sequence belongs to the ATPase epsilon chain family. As to quaternary structure, F-type ATPases have 2 components, CF(1) - the catalytic core - and CF(0) - the membrane proton channel. CF(1) has five subunits: alpha(3), beta(3), gamma(1), delta(1), epsilon(1). CF(0) has three main subunits: a, b and c.

It localises to the cellular thylakoid membrane. Its function is as follows. Produces ATP from ADP in the presence of a proton gradient across the membrane. This Parasynechococcus marenigrum (strain WH8102) protein is ATP synthase epsilon chain.